The primary structure comprises 372 residues: Stress-activated protein kinase JNK (372 aa).

Positions 24-320 constitute a Protein kinase domain; the sequence is YINLRPIGSG…VDEALKHEYI (297 aa). ATP-binding positions include 31–36 and lysine 53; that span reads GSGAQG. The active-site Proton acceptor is aspartate 149. Phosphothreonine is present on threonine 181. Positions 181–183 match the TXY motif; it reads TPY. Tyrosine 183 bears the Phosphotyrosine mark.

The protein belongs to the protein kinase superfamily. CMGC Ser/Thr protein kinase family. MAP kinase subfamily. Interacts with MKP-4 (via tyrosine-protein phosphatase domain); the interaction dephosphorylates bsk. Mg(2+) is required as a cofactor. Post-translationally, dually phosphorylated on Thr-181 and Tyr-183, which activates the enzyme. As to expression, during gastrulation, expression is seen in cells undergoing morphogenetic movements. By stage 9 of embryonic development, expression is ubiquitous. At stages 12-14, expression occurs in epidermis and central nervous system. At stage 15, expression is restricted to ventral nerve cord, brain and some peripheral neurons. In larvae, expression is seen in all imaginal disks, with highest levels in wing and eye disks, and in the CNS. Adults express the protein in fat body and hemocytes.

The protein localises to the nucleus. The protein resides in the cytoplasm. The enzyme catalyses L-seryl-[protein] + ATP = O-phospho-L-seryl-[protein] + ADP + H(+). It catalyses the reaction L-threonyl-[protein] + ATP = O-phospho-L-threonyl-[protein] + ADP + H(+). Activated by threonine and tyrosine phosphorylation by the dual specificity kinase, hep. Inhibited by dual specificity phosphatase, puckered. In terms of biological role, mitogen-activated protein kinase and key component of the c-Jun N-terminal kinase (JNK) pathway which phosphorylate and activate transcription factors involved in a wide range of biological processes including response to various stresses, cellular proliferation, differentiation and migration, and regulation of cell shape. Responds to activation by environmental stress by phosphorylating a number of transcription factors, primarily components of AP-1 such as Jra and also the transcriptional repressor aop, and thus regulates transcriptional activity. Component of the immune response activated by bacterial infection, and is involved in wound healing and in dorsal closure, a morphogenetic movement during embryogenesis. Functions in the systematic response to wounding acting downstream of the Hayan-phenoloxidase PPO1 cascade. During epidermal wound healing involved in cellular polarization by inducing the translocation of sktl and mys/integrin beta to the trailing edge. Exhibits cytoprotective activity in neuronal cells in response to wounding to the integument. Controls the expression of a phosphatase, puckered, at the edges of wounded epidermal tissue and in the dorsal epithelium during dorsal closure. Regulates the activity of SREBP in neurons and thereby the accumulation of lipids in glia. Plays a role in positively regulating the expression of DIP2 independently of AP-1, thereby ensuring proper axon guidance in mushroom bodies. In enterocytes and differentiating progenitors of the gut that are experiencing inorganic phosphate (Pi) deficiency, activated by Cka to induce nearby progenitor cells to proliferate and form new absorptive cells, probably helping the organism to cope with the nutrient deficiency by maximizing absorption of dietary Pi. This Drosophila melanogaster (Fruit fly) protein is Stress-activated protein kinase JNK.